The following is a 364-amino-acid chain: Oxidized low-density lipoprotein receptor 1 (364 aa).

The interval 1–21 (MAFDDKMKPVNGQPDQKSCGK) is disordered. Topologically, residues 1–31 (MAFDDKMKPVNGQPDQKSCGKKPKGLHLLSS) are cytoplasmic. Residues 32 to 54 (TWWCPAAVTLAILCLVLSVTLIV) traverse the membrane as a helical; Signal-anchor for type II membrane protein segment. S-palmitoyl cysteine attachment occurs at residues C35 and C45. A neck region spans residues 55–242 (QQTQLLQVSD…GPCPQDWIWH (188 aa)). Residues 55–364 (QQTQLLQVSD…QKKANLLLTQ (310 aa)) are Extracellular-facing. Residues N72, N92, and N138 are each glycosylated (N-linked (GlcNAc...) asparagine). Residues 83-233 (QMSAQKKAEN…ALQRAANSSG (151 aa)) adopt a coiled-coil conformation. Repeat copies occupy residues 96–141 (ESKR…NASE), 142–187 (ESKW…KYSE), and 188–233 (ESQR…NSSG). Disulfide bonds link C235–C246, C262–C354, and C333–C346. Residues 242–355 (HKENCYLFHG…CILTAFSICQ (114 aa)) enclose the C-type lectin domain.

In terms of assembly, homodimer; disulfide-linked. May form a hexamer composed of 3 homodimers. Interacts with HSP70. N-glycosylated. In terms of tissue distribution, predominantly expressed in lung and at lower level in kidney. Expressed in macrophages but not in vascular smooth muscle cells.

It localises to the cell membrane. Its subcellular location is the membrane raft. The protein localises to the secreted. Its function is as follows. Receptor that mediates the recognition, internalization and degradation of oxidatively modified low density lipoprotein (oxLDL) by vascular endothelial cells. OxLDL is a marker of atherosclerosis that induces vascular endothelial cell activation and dysfunction, resulting in pro-inflammatory responses, pro-oxidative conditions and apoptosis. Its association with oxLDL induces the activation of NF-kappa-B through an increased production of intracellular reactive oxygen and a variety of pro-atherogenic cellular responses including a reduction of nitric oxide (NO) release, monocyte adhesion and apoptosis. In addition to binding oxLDL, it acts as a receptor for the HSP70 protein involved in antigen cross-presentation to naive T-cells in dendritic cells, thereby participating in cell-mediated antigen cross-presentation. Also involved in inflammatory process, by acting as a leukocyte-adhesion molecule at the vascular interface in endotoxin-induced inflammation. Also acts as a receptor for advanced glycation end (AGE) products, activated platelets, monocytes, apoptotic cells and both Gram-negative and Gram-positive bacteria. This is Oxidized low-density lipoprotein receptor 1 (Olr1) from Rattus norvegicus (Rat).